Here is a 465-residue protein sequence, read N- to C-terminus: GDNF family receptor alpha-1 (465 aa).

Residues 1–24 (MFLATLYFALPLLDLLLSAEVSGG) form the signal peptide. A run of 3 repeats spans residues 25 to 113 (DRLD…LQGN), 150 to 238 (KGNN…YEER), and 239 to 342 (EKPN…KNAI). C36 and C42 are oxidised to a cystine. The N-linked (GlcNAc...) asparagine glycan is linked to N59. 10 disulfides stabilise this stretch: C154–C214, C161–C167, C178–C192, C187–C233, C216–C221, C243–C313, C250–C256, C267–C285, C277–C337, and C315–C325. N-linked (GlcNAc...) asparagine glycans are attached at residues N347 and N406. S429 is lipidated: GPI-anchor amidated serine. The propeptide at 430 to 465 (HITTKSMAAPPSCGLSPLLVLVVTALSTLLSLTETS) is removed in mature form.

This sequence belongs to the GDNFR family. In terms of assembly, interacts with GDNF ligand and RET: forms a 2:2:2 ternary complex composed of GDNF ligand, GFRA1 and RET receptor. Interacts with SORL1, either alone or in complex with GDNF. Interaction between SORL1 and GFRA1 leads to GFRA1 internalization, but not degradation.

It localises to the cell membrane. The protein resides in the golgi apparatus. Its subcellular location is the trans-Golgi network. The protein localises to the endosome. It is found in the multivesicular body. Coreceptor for GDNF, a neurotrophic factor that enhances survival and morphological differentiation of dopaminergic neurons and increases their high-affinity dopamine uptake. GDNF-binding leads to autophosphorylation and activation of the RET receptor. This is GDNF family receptor alpha-1 (GFRA1) from Homo sapiens (Human).